We begin with the raw amino-acid sequence, 277 residues long: Large ribosomal subunit protein uL15c (277 aa).

Residues 1–67 constitute a chloroplast transit peptide; the sequence is MATPLSISSN…FARPLVVVSQ (67 aa). Position 68 is an N-acetylthreonine (threonine 68). Positions 81–125 are disordered; that stretch reads FRLDNLGPQPGSRKKQKRKGRGISAGQGASCGFGMRGQKSRSGPG. A compositionally biased stretch (basic residues) spans 92 to 101; sequence SRKKQKRKGR. Gly residues predominate over residues 103-115; sequence ISAGQGASCGFGM.

This sequence belongs to the universal ribosomal protein uL15 family. As to quaternary structure, part of the 50S ribosomal subunit.

It is found in the plastid. Its subcellular location is the chloroplast. The sequence is that of Large ribosomal subunit protein uL15c (RPL15) from Arabidopsis thaliana (Mouse-ear cress).